The following is a 316-amino-acid chain: Actinorhodin polyketide synthase bifunctional cyclase/dehydratase (316 aa).

It functions in the pathway antibiotic biosynthesis; actinorhodin biosynthesis. In terms of biological role, is needed for correct cyclization of the oligoketide leading to isochromanequinone formation. The protein is Actinorhodin polyketide synthase bifunctional cyclase/dehydratase of Streptomyces coelicolor (strain ATCC BAA-471 / A3(2) / M145).